The primary structure comprises 597 residues: uncharacterized protein (597 aa).

Residues 48-198 (LHPYNPYSSL…DSILSLTKET (151 aa)) enclose the Helicase ATP-binding domain. 61–68 (YDVGLGKT) is a binding site for ATP. The DEVH box motif lies at 146–149 (DEVH). The Helicase C-terminal domain occupies 275 to 467 (KINAFINSIK…DIPKIDNEMV (193 aa)).

It belongs to the helicase family.

Functionally, the presence of the two linear plasmids, termed pGKL1 and pGKL2, in strains of Kluyveromyces lactis confers the killer phenotype to the host cell, by promoting the secretion of a toxin able to inhibit the growth of sensitive strains. This is an uncharacterized protein from Kluyveromyces lactis (strain ATCC 8585 / CBS 2359 / DSM 70799 / NBRC 1267 / NRRL Y-1140 / WM37) (Yeast).